Here is a 246-residue protein sequence, read N- to C-terminus: Chalcone--flavanone isomerase 1 (246 aa).

Residues T59, N124, and S201 each coordinate substrate.

It belongs to the chalcone isomerase family. Mostly expressed in siliques and flowers, and, to a lower extent, in leaves.

The enzyme catalyses a chalcone = a flavanone.. It participates in secondary metabolite biosynthesis; flavonoid biosynthesis. Catalyzes the intramolecular cyclization of bicyclic chalcones into tricyclic (S)-flavanones. Responsible for the isomerization of 4,2',4',6'-tetrahydroxychalcone (also termed chalcone) into naringenin. The protein is Chalcone--flavanone isomerase 1 (CHI1) of Arabidopsis thaliana (Mouse-ear cress).